The following is a 420-amino-acid chain: MSGRPRTTSFAESCKPVQQPSAFGSMKVSRDKDGSKVTTVVATPGQGPDRPQEVSYTDTKVIGNGSFGVVYQAKLCDSGELVAIKKVLQDKRFKNRELQIMRKLDHCNIVRLRYFFYSSGEKKDEVYLNLVLDYVPETVYRVARHYSRAKQTLPVIYVKLYMYQLFRSLAYIHSFGICHRDIKPQNLLLDPDTAVLKLCDFGSAKQLVRGEPNVSYICSRYYRAPELIFGATDYTSSIDVWSAGCVLAELLLGQPIFPGDSGVDQLVEIIKVLGTPTREQIREMNPNYTEFKFPQIKAHPWTKVFRPRTPPEAIALCSRLLEYTPTARLTPLEACAHSFFDELRDPNVKLPNGRDTPALFNFTTQELSSNPPLATILIPPHARIQAAASTPTNATAASDANTGDRGQTNNAASASASNST.

Residues 1–22 (MSGRPRTTSFAESCKPVQQPSA) show a composition bias toward polar residues. Residues 1–53 (MSGRPRTTSFAESCKPVQQPSAFGSMKVSRDKDGSKVTTVVATPGQGPDRPQE) are disordered. At serine 9 the chain carries Phosphoserine; by PKB/AKT1, RPS6KA3 and SGK3. A lipid anchor (S-palmitoyl cysteine) is attached at cysteine 14. Residues 56–340 (YTDTKVIGNG…PLEACAHSFF (285 aa)) form the Protein kinase domain. ATP contacts are provided by residues 62-70 (IGNGSFGVV) and lysine 85. The active-site Proton acceptor is aspartate 181. Tyrosine 216 is subject to Phosphotyrosine. The segment covering 386-401 (AAASTPTNATAASDAN) has biased composition (low complexity). Positions 386–420 (AAASTPTNATAASDANTGDRGQTNNAASASASNST) are disordered. Serine 389 is subject to Phosphoserine. Phosphothreonine is present on residues threonine 390 and threonine 402. Positions 409 to 420 (NNAASASASNST) are enriched in low complexity.

This sequence belongs to the protein kinase superfamily. CMGC Ser/Thr protein kinase family. GSK-3 subfamily. As to quaternary structure, monomer. Interacts with ARRB2, DISC1 and ZBED3. Interacts with CABYR, MMP2, MUC1, NIN and PRUNE1. Interacts with AXIN1; the interaction mediates hyperphosphorylation of CTNNB1 leading to its ubiquitination and destruction. Interacts with and phosphorylates SNAI1. Interacts with DNM1L (via a C-terminal domain). Found in a complex composed of MACF1, APC, AXIN1, CTNNB1 and GSK3B. Interacts with SGK3. Interacts with DAB2IP (via C2 domain); the interaction stimulates GSK3B kinase activation. Interacts (via C2 domain) with PPP2CA. Interacts with the CLOCK-BMAL1 heterodimer. Interacts with the BMAL1. Interacts with CTNND2. Interacts with NCYM. The complex composed, at least, of APC, CTNNB1 and GSK3B interacts with JPT1; the interaction requires the inactive form of GSK3B (phosphorylated at 'Ser-9'). Forms a complex composed of PRKAR2A or PRKAR2B, GSK3B and GSKIP through GSKIP interaction; facilitates PKA-induced phosphorylation and regulates GSK3B activity. Interacts with GSKIP. Interacts with GID8. Interacts with PIWIL2. Interacts with LMBR1L. Interacts with DDX3X. Interacts with BIRC2. Interacts with TNFRSF10B; TNFRSF10B stimulation inhibits GSK3B kinase activity. Interacts with RICTOR; the interaction results in phosphorylation of RICTOR at 'Thr-1695' by GSK3B which facilitates FBXW7-mediated ubiquitination and subsequent degradation of RICTOR. Found in a complex with SLC39A6, SLC39A10 and with GSK3B that controls NCAM1 phosphorylation. Interacts with PKP3 (via ARM repeats); the interaction may be involved in PKP3 protein degradation. Post-translationally, phosphorylated by AKT1 and ILK1. Upon insulin-mediated signaling, the activated PKB/AKT1 protein kinase phosphorylates and deactivates GSK3B, resulting in the dephosphorylation and activation of GYS1. Activated by phosphorylation at Tyr-216. Inactivated by phosphorylation at Ser-9. Phosphorylated in a circadian manner in the hippocampus. Mono-ADP-ribosylation by PARP10 negatively regulates kinase activity. In terms of processing, palmitoylated. Palmitoylation by ZDHHC4 prevents AKT1-mediated phosphorylation. As to expression, expressed in testis, thymus, prostate and ovary and weakly expressed in lung, brain and kidney. Colocalizes with EIF2AK2/PKR and TAU in the Alzheimer disease (AD) brain.

It is found in the cytoplasm. Its subcellular location is the nucleus. The protein localises to the cell membrane. The catalysed reaction is L-seryl-[tau protein] + ATP = O-phospho-L-seryl-[tau protein] + ADP + H(+). It carries out the reaction L-threonyl-[tau protein] + ATP = O-phospho-L-threonyl-[tau protein] + ADP + H(+). It catalyses the reaction L-seryl-[protein] + ATP = O-phospho-L-seryl-[protein] + ADP + H(+). The enzyme catalyses L-threonyl-[protein] + ATP = O-phospho-L-threonyl-[protein] + ADP + H(+). With respect to regulation, activated by phosphorylation at Tyr-216. In response to insulin, inhibited by phosphorylation at Ser-9 by PKB/AKT1 and RPS6KA3; phosphorylation at this site causes a conformational change, preventing access of substrates to the active site. Inhibited by IL22 treatment which also triggers phosphorylation at Ser-9, promoting inactivation. Inhibited by lithium. Its function is as follows. Constitutively active protein kinase that acts as a negative regulator in the hormonal control of glucose homeostasis, Wnt signaling and regulation of transcription factors and microtubules, by phosphorylating and inactivating glycogen synthase (GYS1 or GYS2), EIF2B, CTNNB1/beta-catenin, APC, AXIN1, DPYSL2/CRMP2, JUN, NFATC1/NFATC, MAPT/TAU and MACF1. Requires primed phosphorylation of the majority of its substrates. In skeletal muscle, contributes to insulin regulation of glycogen synthesis by phosphorylating and inhibiting GYS1 activity and hence glycogen synthesis. May also mediate the development of insulin resistance by regulating activation of transcription factors. Regulates protein synthesis by controlling the activity of initiation factor 2B (EIF2BE/EIF2B5) in the same manner as glycogen synthase. In Wnt signaling, GSK3B forms a multimeric complex with APC, AXIN1 and CTNNB1/beta-catenin and phosphorylates the N-terminus of CTNNB1 leading to its degradation mediated by ubiquitin/proteasomes. Phosphorylates JUN at sites proximal to its DNA-binding domain, thereby reducing its affinity for DNA. Phosphorylates NFATC1/NFATC on conserved serine residues promoting NFATC1/NFATC nuclear export, shutting off NFATC1/NFATC gene regulation, and thereby opposing the action of calcineurin. Phosphorylates MAPT/TAU on 'Thr-548', decreasing significantly MAPT/TAU ability to bind and stabilize microtubules. MAPT/TAU is the principal component of neurofibrillary tangles in Alzheimer disease. Plays an important role in ERBB2-dependent stabilization of microtubules at the cell cortex. Phosphorylates MACF1, inhibiting its binding to microtubules which is critical for its role in bulge stem cell migration and skin wound repair. Probably regulates NF-kappa-B (NFKB1) at the transcriptional level and is required for the NF-kappa-B-mediated anti-apoptotic response to TNF-alpha (TNF/TNFA). Negatively regulates replication in pancreatic beta-cells, resulting in apoptosis, loss of beta-cells and diabetes. Through phosphorylation of the anti-apoptotic protein MCL1, may control cell apoptosis in response to growth factors deprivation. Phosphorylates MUC1 in breast cancer cells, decreasing the interaction of MUC1 with CTNNB1/beta-catenin. Is necessary for the establishment of neuronal polarity and axon outgrowth. Phosphorylates MARK2, leading to inhibition of its activity. Phosphorylates SIK1 at 'Thr-182', leading to sustainment of its activity. Phosphorylates ZC3HAV1 which enhances its antiviral activity. Phosphorylates SNAI1, leading to its ubiquitination and proteasomal degradation. Phosphorylates SFPQ at 'Thr-687' upon T-cell activation. Phosphorylates NR1D1 st 'Ser-55' and 'Ser-59' and stabilizes it by protecting it from proteasomal degradation. Regulates the circadian clock via phosphorylation of the major clock components including BMAL1, CLOCK and PER2. Phosphorylates FBXL2 at 'Thr-404' and primes it for ubiquitination by the SCF(FBXO3) complex and proteasomal degradation. Phosphorylates CLOCK AT 'Ser-427' and targets it for proteasomal degradation. Phosphorylates BMAL1 at 'Ser-17' and 'Ser-21' and primes it for ubiquitination and proteasomal degradation. Phosphorylates OGT at 'Ser-3' or 'Ser-4' which positively regulates its activity. Phosphorylates MYCN in neuroblastoma cells which may promote its degradation. Regulates the circadian rhythmicity of hippocampal long-term potentiation and BMAL1 and PER2 expression. Acts as a regulator of autophagy by mediating phosphorylation of KAT5/TIP60 under starvation conditions, activating KAT5/TIP60 acetyltransferase activity and promoting acetylation of key autophagy regulators, such as ULK1 and RUBCNL/Pacer. Negatively regulates extrinsic apoptotic signaling pathway via death domain receptors. Promotes the formation of an anti-apoptotic complex, made of DDX3X, BRIC2 and GSK3B, at death receptors, including TNFRSF10B. The anti-apoptotic function is most effective with weak apoptotic signals and can be overcome by stronger stimulation. Phosphorylates E2F1, promoting the interaction between E2F1 and USP11, stabilizing E2F1 and promoting its activity. Phosphorylates mTORC2 complex component RICTOR at 'Ser-1235' in response to endoplasmic stress, inhibiting mTORC2. Phosphorylates mTORC2 complex component RICTOR at 'Thr-1695' which facilitates FBXW7-mediated ubiquitination and subsequent degradation of RICTOR. Phosphorylates FXR1, promoting FXR1 ubiquitination by the SCF(FBXO4) complex and FXR1 degradation by the proteasome. Phosphorylates interleukin-22 receptor subunit IL22RA1, preventing its proteasomal degradation. The sequence is that of Glycogen synthase kinase-3 beta from Homo sapiens (Human).